Consider the following 454-residue polypeptide: METYTGIPEELKFAVLERIQPTEPEREKLFAIQEELASQVKIAAEKLGIPGVLVKMVGSAARGTWLSGTHDIDVFISFPEETSRKDLETLGMAIAREVARYAEHAEDRHAEHPYLNITYKGFDVDLVPCFRVASASQIKSAVDRTPFHNDFVKPRIKGHEDEVLLLKQFMRGGGVYGSELKTQGFSGYLTELLVIRYGSFKNTIYAACSWKPGEKIDIMQHGEIEHEEPLVVIDPTDPRRNVAAALSLDKFCTFIDHCREFLKNPELSFFFPAPILPLEDSEILEKLESRKSTQLAVVFKTPDVVEDVLFPQLYKMEQAVAALLKEYDFTVIKTGVWSGNTETAVMMELISGTLPNVKKHIGPPVWVKVHAEKFKEKYQAADGVFGGYIENGKYIFEILRKYPTARGLLEDRLMSCSLGKQVHQSVNEGFEIIENAGICRLKEYDFRIYLRKWI.

ATP is bound by residues Ser59 and Arg62. The CTP site is built by Ser59 and Arg62. Asp71, Asp73, and Asp125 together coordinate Mg(2+). His148, Lys167, and Tyr176 together coordinate ATP. Residues His148, Lys167, and Tyr176 each contribute to the CTP site.

This sequence belongs to the tRNA nucleotidyltransferase/poly(A) polymerase family. Archaeal CCA-adding enzyme subfamily. In terms of assembly, homodimer. The cofactor is Mg(2+).

The enzyme catalyses a tRNA precursor + 2 CTP + ATP = a tRNA with a 3' CCA end + 3 diphosphate. It catalyses the reaction a tRNA with a 3' CCA end + 2 CTP + ATP = a tRNA with a 3' CCACCA end + 3 diphosphate. Its function is as follows. Catalyzes the addition and repair of the essential 3'-terminal CCA sequence in tRNAs without using a nucleic acid template. Adds these three nucleotides in the order of C, C, and A to the tRNA nucleotide-73, using CTP and ATP as substrates and producing inorganic pyrophosphate. tRNA 3'-terminal CCA addition is required both for tRNA processing and repair. Also involved in tRNA surveillance by mediating tandem CCA addition to generate a CCACCA at the 3' terminus of unstable tRNAs. While stable tRNAs receive only 3'-terminal CCA, unstable tRNAs are marked with CCACCA and rapidly degraded. The protein is CCA-adding enzyme of Methanosarcina barkeri (strain Fusaro / DSM 804).